Here is a 352-residue protein sequence, read N- to C-terminus: Carbohydrate sulfotransferase 11 (352 aa).

Over Met1–Arg16 the chain is Cytoplasmic. A helical; Signal-anchor for type II membrane protein transmembrane segment spans residues Met17–Leu37. The Lumenal portion of the chain corresponds to His38–Asp352. Residues Pro124–Asn130 and Arg186–Ser194 each bind 3'-phosphoadenylyl sulfate. Asn205, Asn223, Asn321, and Asn342 each carry an N-linked (GlcNAc...) asparagine glycan.

It belongs to the sulfotransferase 2 family. N-glycosylated; required for activity and stability. In terms of tissue distribution, predominantly expressed in brain and kidney. Also expressed at weaker level in heart, spleen and lung. Expressed in developing chondrocytes.

The protein localises to the golgi apparatus membrane. The catalysed reaction is chondroitin beta-D-glucuronate + n 3'-phosphoadenylyl sulfate = chondroitin 4'-sulfate + n adenosine 3',5'-bisphosphate + n H(+). Its function is as follows. Catalyzes the transfer of sulfate to position 4 of the N-acetylgalactosamine (GalNAc) residue of chondroitin. Chondroitin sulfate constitutes the predominant proteoglycan present in cartilage and is distributed on the surfaces of many cells and extracellular matrices. Can also sulfate Gal residues in desulfated dermatan sulfate. Preferentially sulfates in GlcA-&gt;GalNAc unit than in IdoA-&gt;GalNAc unit. Does not form 4, 6-di-O-sulfated GalNAc when chondroitin sulfate C is used as an acceptor. The chain is Carbohydrate sulfotransferase 11 (Chst11) from Mus musculus (Mouse).